The chain runs to 260 residues: Coiled-coil domain-containing protein 127 (260 aa).

The stretch at 76-139 (AVISEHRRAV…EKSRLQPLRN (64 aa)) forms a coiled coil.

The chain is Coiled-coil domain-containing protein 127 (Ccdc127) from Mus musculus (Mouse).